The sequence spans 116 residues: Iron-sulfur cluster insertion protein ErpA (116 aa).

Cysteine 44, cysteine 108, and cysteine 110 together coordinate iron-sulfur cluster.

The protein belongs to the HesB/IscA family. As to quaternary structure, homodimer. Requires iron-sulfur cluster as cofactor.

Required for insertion of 4Fe-4S clusters for at least IspG. This chain is Iron-sulfur cluster insertion protein ErpA, found in Stutzerimonas stutzeri (strain A1501) (Pseudomonas stutzeri).